The following is a 238-amino-acid chain: Ribonuclease PH (238 aa).

Residues Arg-86 and 124-126 contribute to the phosphate site; that span reads GTR.

The protein belongs to the RNase PH family. In terms of assembly, homohexameric ring arranged as a trimer of dimers.

The enzyme catalyses tRNA(n+1) + phosphate = tRNA(n) + a ribonucleoside 5'-diphosphate. Phosphorolytic 3'-5' exoribonuclease that plays an important role in tRNA 3'-end maturation. Removes nucleotide residues following the 3'-CCA terminus of tRNAs; can also add nucleotides to the ends of RNA molecules by using nucleoside diphosphates as substrates, but this may not be physiologically important. Probably plays a role in initiation of 16S rRNA degradation (leading to ribosome degradation) during starvation. In Psychrobacter arcticus (strain DSM 17307 / VKM B-2377 / 273-4), this protein is Ribonuclease PH.